The following is a 160-amino-acid chain: Troponin C, skeletal muscle (160 aa).

T2 is subject to N-acetylthreonine. 4 consecutive EF-hand domains span residues E15–T50, P51–E86, K91–H126, and V127–Q160. Ca(2+) is bound by residues D28, D30, D34, E39, D64, D66, S68, T70, E75, D104, N106, D108, Y110, E115, D140, N142, D144, R146, and E151.

It belongs to the troponin C family.

Functionally, troponin is the central regulatory protein of striated muscle contraction. Tn consists of three components: Tn-I which is the inhibitor of actomyosin ATPase, Tn-T which contains the binding site for tropomyosin and Tn-C. The binding of calcium to Tn-C abolishes the inhibitory action of Tn on actin filaments. The chain is Troponin C, skeletal muscle (TNNC2) from Oryctolagus cuniculus (Rabbit).